A 356-amino-acid chain; its full sequence is 3-dehydroquinate synthase (356 aa).

NAD(+) is bound by residues 106–110 (GVVGD), 130–131 (TT), Lys-143, and Lys-152. Zn(2+) is bound by residues Glu-185, His-248, and His-265.

This sequence belongs to the sugar phosphate cyclases superfamily. Dehydroquinate synthase family. Requires Co(2+) as cofactor. The cofactor is Zn(2+). It depends on NAD(+) as a cofactor.

Its subcellular location is the cytoplasm. The catalysed reaction is 7-phospho-2-dehydro-3-deoxy-D-arabino-heptonate = 3-dehydroquinate + phosphate. Its pathway is metabolic intermediate biosynthesis; chorismate biosynthesis; chorismate from D-erythrose 4-phosphate and phosphoenolpyruvate: step 2/7. Its function is as follows. Catalyzes the conversion of 3-deoxy-D-arabino-heptulosonate 7-phosphate (DAHP) to dehydroquinate (DHQ). This Thermoanaerobacter pseudethanolicus (strain ATCC 33223 / 39E) (Clostridium thermohydrosulfuricum) protein is 3-dehydroquinate synthase.